Consider the following 279-residue polypeptide: Ultraviolet N-glycosylase/AP lyase (279 aa).

The region spanning 123–142 (LEDLVALPGVGRKTAFVVLG) is the HhH domain. Cysteine 203, cysteine 210, cysteine 213, and cysteine 219 together coordinate [4Fe-4S] cluster. Residues 256–279 (TAGAAGPRPRAGGXAPGLPAQPFR) form a disordered region.

It belongs to the Nth/MutY family. Requires [4Fe-4S] cluster as cofactor.

Its function is as follows. DNA repair enzyme that has both DNA N-glycosylase activity and AP-lyase activity. Initiates repair at cis-syn pyrimidine dimers. Proceeds via an imino enzyme:DNA intermediate. In Micrococcus luteus (strain ATCC 4698 / DSM 20030 / JCM 1464 / CCM 169 / CCUG 5858 / IAM 1056 / NBRC 3333 / NCIMB 9278 / NCTC 2665 / VKM Ac-2230) (Micrococcus lysodeikticus), this protein is Ultraviolet N-glycosylase/AP lyase (pdg).